Here is a 206-residue protein sequence, read N- to C-terminus: Small ribosomal subunit protein uS4 (206 aa).

The S4 RNA-binding domain occupies 94–157 (RRLDNVVYRL…RSRTYFKNLV (64 aa)).

Belongs to the universal ribosomal protein uS4 family. In terms of assembly, part of the 30S ribosomal subunit. Contacts protein S5. The interaction surface between S4 and S5 is involved in control of translational fidelity.

In terms of biological role, one of the primary rRNA binding proteins, it binds directly to 16S rRNA where it nucleates assembly of the body of the 30S subunit. Its function is as follows. With S5 and S12 plays an important role in translational accuracy. The chain is Small ribosomal subunit protein uS4 from Chloroflexus aurantiacus (strain ATCC 29364 / DSM 637 / Y-400-fl).